The sequence spans 186 residues: Type 1 phosphatases regulator ypi-1 (186 aa).

Over residues Met-1–Pro-32 the composition is skewed to polar residues. The tract at residues Met-1–Lys-186 is disordered. Residues Asp-82–Asp-94 are compositionally biased toward low complexity. Residues His-122–His-137 show a composition bias toward basic and acidic residues. Over residues Gly-138–Glu-151 the composition is skewed to basic residues.

It belongs to the YPI1 family.

It localises to the nucleus. Its function is as follows. Regulator of type 1 phosphatases which maintains protein phosphatase activity under strict control. This Neurospora crassa (strain ATCC 24698 / 74-OR23-1A / CBS 708.71 / DSM 1257 / FGSC 987) protein is Type 1 phosphatases regulator ypi-1 (ypi-1).